We begin with the raw amino-acid sequence, 81 residues long: Putative membrane protein insertion efficiency factor (81 aa).

The interval 61-81 (NDGGYDPVPPAPSSRTSSIAE) is disordered.

Belongs to the UPF0161 family.

The protein localises to the cell inner membrane. In terms of biological role, could be involved in insertion of integral membrane proteins into the membrane. This chain is Putative membrane protein insertion efficiency factor, found in Pseudomonas putida (strain ATCC 47054 / DSM 6125 / CFBP 8728 / NCIMB 11950 / KT2440).